The primary structure comprises 1182 residues: Rho guanine nucleotide exchange factor osg-1 (1182 aa).

Positions 1 to 12 are enriched in acidic residues; sequence MLNPNDADDSDS. Residues 1–96 are disordered; sequence MLNPNDADDS…TNSEPNVDMP (96 aa). Polar residues predominate over residues 29-41; the sequence is ATVSPSTRNSFYN. Basic and acidic residues predominate over residues 69-78; the sequence is ASRERSESRR. Positions 357 to 544 constitute a DH domain; that stretch reads VRHLAARELL…HCLAVAINQH (188 aa). Residues 637–669 are a coiled coil; sequence EDVQISKDTLSQLEEVERKLESSREDDRVLKKM. Positions 863–884 are disordered; it reads INSSGSDTESSSDEGTSTAGQT. The segment covering 865–879 has biased composition (low complexity); that stretch reads SSGSDTESSSDEGTS. Residues 897–922 adopt a coiled-coil conformation; it reads VVNSTERVRSRARDRLARLRNSITSI.

In terms of tissue distribution, expressed in muscles in the body wall and head, and in the nervous system in neurons including FLP and ASE neurons in the head.

Functionally, probable guanine nucleotide exchange factor which regulates the Rho GTPase rho-1. Functions in ASE sensory neurons where it promotes neuronal degeneration under conditions of oxidative stress. This Caenorhabditis elegans protein is Rho guanine nucleotide exchange factor osg-1.